The following is a 209-amino-acid chain: Ribosomal RNA large subunit methyltransferase E (209 aa).

G63, W65, D83, D99, and D124 together coordinate S-adenosyl-L-methionine. K164 (proton acceptor) is an active-site residue.

It belongs to the class I-like SAM-binding methyltransferase superfamily. RNA methyltransferase RlmE family.

Its subcellular location is the cytoplasm. The enzyme catalyses uridine(2552) in 23S rRNA + S-adenosyl-L-methionine = 2'-O-methyluridine(2552) in 23S rRNA + S-adenosyl-L-homocysteine + H(+). Functionally, specifically methylates the uridine in position 2552 of 23S rRNA at the 2'-O position of the ribose in the fully assembled 50S ribosomal subunit. In Klebsiella pneumoniae (strain 342), this protein is Ribosomal RNA large subunit methyltransferase E.